Here is a 596-residue protein sequence, read N- to C-terminus: Elongation factor 4 (596 aa).

The region spanning 2 to 184 (KHIRNFSIIA…VIVEQIPPPE (183 aa)) is the tr-type G domain. GTP-binding positions include 14 to 19 (DHGKST) and 131 to 134 (NKID).

It belongs to the TRAFAC class translation factor GTPase superfamily. Classic translation factor GTPase family. LepA subfamily.

Its subcellular location is the cell inner membrane. The catalysed reaction is GTP + H2O = GDP + phosphate + H(+). Functionally, required for accurate and efficient protein synthesis under certain stress conditions. May act as a fidelity factor of the translation reaction, by catalyzing a one-codon backward translocation of tRNAs on improperly translocated ribosomes. Back-translocation proceeds from a post-translocation (POST) complex to a pre-translocation (PRE) complex, thus giving elongation factor G a second chance to translocate the tRNAs correctly. Binds to ribosomes in a GTP-dependent manner. The sequence is that of Elongation factor 4 from Shewanella oneidensis (strain ATCC 700550 / JCM 31522 / CIP 106686 / LMG 19005 / NCIMB 14063 / MR-1).